Consider the following 179-residue polypeptide: ATP-dependent protease subunit HslV (179 aa).

The active site involves Thr-7. Positions 163, 166, and 169 each coordinate Na(+).

This sequence belongs to the peptidase T1B family. HslV subfamily. A double ring-shaped homohexamer of HslV is capped on each side by a ring-shaped HslU homohexamer. The assembly of the HslU/HslV complex is dependent on binding of ATP.

The protein localises to the cytoplasm. It catalyses the reaction ATP-dependent cleavage of peptide bonds with broad specificity.. Allosterically activated by HslU binding. Protease subunit of a proteasome-like degradation complex believed to be a general protein degrading machinery. The protein is ATP-dependent protease subunit HslV of Amoebophilus asiaticus (strain 5a2).